Here is a 192-residue protein sequence, read N- to C-terminus: Potassium channel HX13_20290 (192 aa).

The helical transmembrane segment at 1-24 threads the bilayer; it reads MTKGRLEAFSDGVLAIIITIMVLE. Positions 5–11 match the RxxxFSD motif motif; the sequence is RLEAFSD. A topological domain (cytoplasmic) is located at residue Leu-25. A short helix H1 region spans residues 26-29; it reads KVPE. The Extracellular portion of the chain corresponds to 26 to 39; it reads KVPEGSSWASLQPI. A short helix H2 region spans residues 31–37; the sequence is SSWASLQ. A helical transmembrane segment spans residues 40 to 65; sequence LPRFLAYIFSFIYVGIYWNNHHHLFQ. The Cytoplasmic segment spans residues 66-71; sequence TVKKVN. A helical transmembrane segment spans residues 72–93; it reads GSILWANLHLLFWLSLMPIATE. Residues 94 to 101 are Extracellular-facing; that stretch reads WIGTSHFA. A helical transmembrane segment spans residues 102–126; that stretch reads QNPVATYGIGLIMSAIAYTILENVI. Over 127–133 the chain is Cytoplasmic; sequence IRCEGEN. Residues 134–162 traverse the membrane as a helical segment; the sequence is SKLKEAIHSKFKEYISIIFYVLGIATSFF. Residues 163–164 lie on the Extracellular side of the membrane; it reads YP. A helical membrane pass occupies residues 165–180; it reads YIAIGFYYLVALIWLI. The Cytoplasmic segment spans residues 181–192; sequence PDKRIEKSLKEN.

This sequence belongs to the TMEM175 family. In terms of assembly, homotetramer.

It is found in the membrane. It carries out the reaction K(+)(in) = K(+)(out). Functionally, potassium channel. In Chryseobacterium sp. (strain P1-3), this protein is Potassium channel HX13_20290.